Reading from the N-terminus, the 210-residue chain is Probable nicotinate-nucleotide adenylyltransferase (210 aa).

It belongs to the NadD family.

The catalysed reaction is nicotinate beta-D-ribonucleotide + ATP + H(+) = deamido-NAD(+) + diphosphate. The protein operates within cofactor biosynthesis; NAD(+) biosynthesis; deamido-NAD(+) from nicotinate D-ribonucleotide: step 1/1. Its function is as follows. Catalyzes the reversible adenylation of nicotinate mononucleotide (NaMN) to nicotinic acid adenine dinucleotide (NaAD). This is Probable nicotinate-nucleotide adenylyltransferase from Streptococcus pyogenes serotype M1.